A 268-amino-acid polypeptide reads, in one-letter code: Tryptophan synthase alpha chain (268 aa).

Active-site proton acceptor residues include Glu-40 and Asp-51.

It belongs to the TrpA family. Tetramer of two alpha and two beta chains.

The catalysed reaction is (1S,2R)-1-C-(indol-3-yl)glycerol 3-phosphate + L-serine = D-glyceraldehyde 3-phosphate + L-tryptophan + H2O. It participates in amino-acid biosynthesis; L-tryptophan biosynthesis; L-tryptophan from chorismate: step 5/5. In terms of biological role, the alpha subunit is responsible for the aldol cleavage of indoleglycerol phosphate to indole and glyceraldehyde 3-phosphate. This is Tryptophan synthase alpha chain from Geobacillus kaustophilus (strain HTA426).